Reading from the N-terminus, the 545-residue chain is External NADH-ubiquinone oxidoreductase 2, mitochondrial (545 aa).

The N-terminal 21 residues, 1–21 (MLPRLGFARTARSIHRFKMTQ), are a transit peptide targeting the mitochondrion. 99–129 (ELVILGTGWGAISLLKKLDTSLYNVTVVSPR) provides a ligand contact to FAD. 260–296 (LTFVVVGGGPTGVEFAAELQDYINQDLRKWMPDLSKE) is a binding site for NAD(+).

The protein belongs to the NADH dehydrogenase family.

The protein localises to the mitochondrion intermembrane space. The enzyme catalyses a quinone + NADH + H(+) = a quinol + NAD(+). It carries out the reaction a ubiquinone + NADH + H(+) = a ubiquinol + NAD(+). Functionally, external NADH dehydrogenase required for optimum cellular growth with a number of nonfermentable carbon sources, including ethanol. With NDE1, performes the mitochondrial oxidation of cytosolic NADH under these growth conditions. Regulates the mitochondrial glycerol-3-phosphate dehydrogenase, GUT2, also involved in cytosolic NADH oxidation. This Saccharomyces cerevisiae (strain ATCC 204508 / S288c) (Baker's yeast) protein is External NADH-ubiquinone oxidoreductase 2, mitochondrial (NDE2).